The primary structure comprises 469 residues: Extracellular endo-alpha-(1-&gt;5)-L-arabinanase 2 (469 aa).

The signal sequence occupies residues 1 to 26 (MFNRLFRVCFLAALIMAFTLPNSVYA). The Proton acceptor role is filled by D38. Substrate is bound by residues D38, D122, 168–171 (NVVD), 188–190 (SYS), and 220–224 (HSRIE). E224 acts as the Proton donor in catalysis. H318 is a binding site for Ca(2+).

It belongs to the glycosyl hydrolase 43 family. In terms of assembly, homodimer. The cofactor is Ca(2+).

It is found in the secreted. It catalyses the reaction Endohydrolysis of (1-&gt;5)-alpha-arabinofuranosidic linkages in (1-&gt;5)-arabinans.. Its pathway is glycan metabolism; L-arabinan degradation. In terms of biological role, involved in the degradation of arabinan and is a key enzyme in the complete degradation of the plant cell wall. Catalyzes the internal cleavage of alpha-(1-&gt;5)-L-arabinofuranosyl residues of the alpha-1,5-L-arabinan to produce arabino-oligosaccharides and L-arabinose. It is also active toward linear branched sugar beet arabinan, and pectin from apple. This Bacillus subtilis (strain 168) protein is Extracellular endo-alpha-(1-&gt;5)-L-arabinanase 2 (abn2).